The chain runs to 443 residues: MSKTYHFIGIKGSGMSALALLLHQMGHKVQGSDVEKYYFTQRGLEQAGITILPFSEDNISPDMELIAGNAFREDNNSEVAYAMRHQLPFKRYHEFLGEFMKQFTSLGVAGAHGKTSTTGLLSHVLKHMTATSYLIGDGTGHGAADARYFVFESDEYERHFMPYHPEYSIITNIDFDHPDYFTGLDDVFNAFNDYAKQVKKALFVYGEDEELRKISSPAPIYYYGFEDTDDFVAFDITRTTNGSDFKVKHKGHAIGQFHVPAYGRHNILNATAVIANLFIAGFDMKLVAEHLKSFSGVKRRFTEKVINDTIIIDDFAHHPTEIIATLDAARQKYPNKEIIAIFQPHTFTRTIALLDDFAHALNEADSVYLAPIYGSAREVDKGDVKVEDLAARVERPAKVISVDNVSPLLDHDNAVYVFMGAGDIQLYERSFEELLANLTKNNQ.

Glycine 110–serine 116 serves as a coordination point for ATP.

This sequence belongs to the MurCDEF family.

The protein localises to the cytoplasm. The catalysed reaction is UDP-N-acetyl-alpha-D-muramate + L-alanine + ATP = UDP-N-acetyl-alpha-D-muramoyl-L-alanine + ADP + phosphate + H(+). The protein operates within cell wall biogenesis; peptidoglycan biosynthesis. In terms of biological role, cell wall formation. This chain is UDP-N-acetylmuramate--L-alanine ligase, found in Streptococcus equi subsp. equi (strain 4047).